The following is a 222-amino-acid chain: 7-cyano-7-deazaguanine synthase (222 aa).

9-19 lines the ATP pocket; sequence ISGGMDSALSA. Zn(2+) is bound by residues cysteine 188, cysteine 196, cysteine 199, and cysteine 202.

The protein belongs to the QueC family. Zn(2+) serves as cofactor.

It catalyses the reaction 7-carboxy-7-deazaguanine + NH4(+) + ATP = 7-cyano-7-deazaguanine + ADP + phosphate + H2O + H(+). The protein operates within purine metabolism; 7-cyano-7-deazaguanine biosynthesis. Its function is as follows. Catalyzes the ATP-dependent conversion of 7-carboxy-7-deazaguanine (CDG) to 7-cyano-7-deazaguanine (preQ(0)). In Sulfurovum sp. (strain NBC37-1), this protein is 7-cyano-7-deazaguanine synthase.